Consider the following 295-residue polypeptide: Indole-3-glycerol phosphate synthase (295 aa).

The protein belongs to the TrpC family.

The enzyme catalyses 1-(2-carboxyphenylamino)-1-deoxy-D-ribulose 5-phosphate + H(+) = (1S,2R)-1-C-(indol-3-yl)glycerol 3-phosphate + CO2 + H2O. It participates in amino-acid biosynthesis; L-tryptophan biosynthesis; L-tryptophan from chorismate: step 4/5. This is Indole-3-glycerol phosphate synthase from Prochlorococcus marinus (strain NATL2A).